Consider the following 653-residue polypeptide: MTVSSHRLELLSPARDAAIAREAILHGADAVYIGGPGFGARHNASNSLKDIAELVPFAHRYGAKIFVTLNTILHDDELEPAQRLITDLYQTGVDALIVQDMGILELDIPPIELHASTQCDIRTVEKAKFLSDVGFTQIVLARELNLDQIRAIHQATDATIEFFIHGALCVAYSGQCYISHAQTGRSANRGDCSQACRLPYTLKDDQGRVVSYEKHLLSMKDNDQTANLGALIDAGVRSFKIEGRYKDMSYVKNITAHYRQMLDAIIEERGDLARASSGRTEHFFVPSTEKTFHRGSTDYFVNARKGDIGAFDSPKFIGLPVGEVVKVAKDHLDVAVTEPLANGDGLNVLIKREVVGFRANTVEKTGENQYRVWPNEMPADLHKIRPHHPLNRNLDHNWQQALTKTSSERRVAVDIELGGWQEQLILTLTSEEGVSITHTLDGQFDEANNAEKAMNNLKDGLAKLGQTLYYARDVQINLPGALFVPNSLLNQFRREAADMLDAARLASYQRGSRKPVADPAPVYPQTHLSFLANVYNQKAREFYHRYGVQLIDAAYEAHEEKGEVPVMITKHCLRFAFNLCPKQAKGNIKSWKATPMQLVNGDEVLTLKFDCRPCEMHVIGKIKNHILKMPLPGSVVASVSPDELLKTLPKRKG.

It belongs to the peptidase U32 family. Interacts with precursors of the 50S ribosomal subunit.

Its activity is regulated as follows. Iron-sulfur clusters and prephenate are required for ho5C2501 formation. Its function is as follows. Responsible for the formation of the 5-hydroxycytidine modification at the C2501 position (ho5C2501) of 23S rRNA. May be a Fe-S protein that catalyzes ho5C2501 formation using prephenate as a hydroxyl group donor. The chain is 23S rRNA 5-hydroxycytidine C2501 synthase from Escherichia coli (strain K12).